The primary structure comprises 396 residues: 1-deoxy-D-xylulose 5-phosphate reductoisomerase (396 aa).

The NADPH site is built by Thr17, Gly18, Ser19, Ile20, Asn47, and Asn130. Lys131 lines the 1-deoxy-D-xylulose 5-phosphate pocket. Glu132 contributes to the NADPH binding site. Asp156 lines the Mn(2+) pocket. Residues Ser157, Glu158, Ser182, and His205 each contribute to the 1-deoxy-D-xylulose 5-phosphate site. Mn(2+) is bound at residue Glu158. Residue Gly211 coordinates NADPH. Positions 218, 223, 224, and 227 each coordinate 1-deoxy-D-xylulose 5-phosphate. A Mn(2+)-binding site is contributed by Glu227.

Belongs to the DXR family. Requires Mg(2+) as cofactor. The cofactor is Mn(2+).

It catalyses the reaction 2-C-methyl-D-erythritol 4-phosphate + NADP(+) = 1-deoxy-D-xylulose 5-phosphate + NADPH + H(+). It functions in the pathway isoprenoid biosynthesis; isopentenyl diphosphate biosynthesis via DXP pathway; isopentenyl diphosphate from 1-deoxy-D-xylulose 5-phosphate: step 1/6. Its function is as follows. Catalyzes the NADPH-dependent rearrangement and reduction of 1-deoxy-D-xylulose-5-phosphate (DXP) to 2-C-methyl-D-erythritol 4-phosphate (MEP). The protein is 1-deoxy-D-xylulose 5-phosphate reductoisomerase of Rhizobium johnstonii (strain DSM 114642 / LMG 32736 / 3841) (Rhizobium leguminosarum bv. viciae).